The sequence spans 728 residues: 1,4-alpha-glucan branching enzyme GlgB (728 aa).

D405 (nucleophile) is an active-site residue. Catalysis depends on E458, which acts as the Proton donor.

This sequence belongs to the glycosyl hydrolase 13 family. GlgB subfamily. In terms of assembly, monomer.

It catalyses the reaction Transfers a segment of a (1-&gt;4)-alpha-D-glucan chain to a primary hydroxy group in a similar glucan chain.. It functions in the pathway glycan biosynthesis; glycogen biosynthesis. Catalyzes the formation of the alpha-1,6-glucosidic linkages in glycogen by scission of a 1,4-alpha-linked oligosaccharide from growing alpha-1,4-glucan chains and the subsequent attachment of the oligosaccharide to the alpha-1,6 position. The protein is 1,4-alpha-glucan branching enzyme GlgB of Shigella boydii serotype 4 (strain Sb227).